The sequence spans 464 residues: Argininosuccinate lyase (464 aa).

Belongs to the lyase 1 family. Argininosuccinate lyase subfamily.

The protein localises to the cytoplasm. The enzyme catalyses 2-(N(omega)-L-arginino)succinate = fumarate + L-arginine. The protein operates within amino-acid biosynthesis; L-arginine biosynthesis; L-arginine from L-ornithine and carbamoyl phosphate: step 3/3. The polypeptide is Argininosuccinate lyase (Sulfurovum sp. (strain NBC37-1)).